The primary structure comprises 132 residues: D-ribose pyranase (132 aa).

Histidine 20 functions as the Proton donor in the catalytic mechanism. Residues aspartate 28, histidine 99, and 121–123 (YSN) each bind substrate.

It belongs to the RbsD / FucU family. RbsD subfamily. Homodecamer.

The protein localises to the cytoplasm. It catalyses the reaction beta-D-ribopyranose = beta-D-ribofuranose. Its pathway is carbohydrate metabolism; D-ribose degradation; D-ribose 5-phosphate from beta-D-ribopyranose: step 1/2. Catalyzes the interconversion of beta-pyran and beta-furan forms of D-ribose. In Lactococcus lactis subsp. lactis (strain IL1403) (Streptococcus lactis), this protein is D-ribose pyranase.